A 423-amino-acid chain; its full sequence is Histidine--tRNA ligase (423 aa).

The protein belongs to the class-II aminoacyl-tRNA synthetase family. As to quaternary structure, homodimer.

Its subcellular location is the cytoplasm. The enzyme catalyses tRNA(His) + L-histidine + ATP = L-histidyl-tRNA(His) + AMP + diphosphate + H(+). This chain is Histidine--tRNA ligase, found in Rhodococcus erythropolis (strain PR4 / NBRC 100887).